The following is a 188-amino-acid chain: Elongation factor P (188 aa).

An N6-(3,6-diaminohexanoyl)-5-hydroxylysine modification is found at K34.

It belongs to the elongation factor P family. Post-translationally, may be beta-lysylated on the epsilon-amino group of Lys-34 by the combined action of EpmA and EpmB, and then hydroxylated on the C5 position of the same residue by EpmC (if this protein is present). Lysylation is critical for the stimulatory effect of EF-P on peptide-bond formation. The lysylation moiety may extend toward the peptidyltransferase center and stabilize the terminal 3-CCA end of the tRNA. Hydroxylation of the C5 position on Lys-34 may allow additional potential stabilizing hydrogen-bond interactions with the P-tRNA.

The protein resides in the cytoplasm. The protein operates within protein biosynthesis; polypeptide chain elongation. Functionally, involved in peptide bond synthesis. Alleviates ribosome stalling that occurs when 3 or more consecutive Pro residues or the sequence PPG is present in a protein, possibly by augmenting the peptidyl transferase activity of the ribosome. Modification of Lys-34 is required for alleviation. In Pasteurella multocida (strain Pm70), this protein is Elongation factor P.